The chain runs to 256 residues: 1-(5-phosphoribosyl)-5-[(5-phosphoribosylamino)methylideneamino] imidazole-4-carboxamide isomerase (256 aa).

The active-site Proton acceptor is the D9. D130 (proton donor) is an active-site residue.

The protein belongs to the HisA/HisF family.

The protein localises to the cytoplasm. It carries out the reaction 1-(5-phospho-beta-D-ribosyl)-5-[(5-phospho-beta-D-ribosylamino)methylideneamino]imidazole-4-carboxamide = 5-[(5-phospho-1-deoxy-D-ribulos-1-ylimino)methylamino]-1-(5-phospho-beta-D-ribosyl)imidazole-4-carboxamide. It functions in the pathway amino-acid biosynthesis; L-histidine biosynthesis; L-histidine from 5-phospho-alpha-D-ribose 1-diphosphate: step 4/9. The sequence is that of 1-(5-phosphoribosyl)-5-[(5-phosphoribosylamino)methylideneamino] imidazole-4-carboxamide isomerase from Prochlorococcus marinus (strain SARG / CCMP1375 / SS120).